Consider the following 38-residue polypeptide: Cytochrome b6-f complex subunit 5 (38 aa).

A helical membrane pass occupies residues 5–25 (LVLGLVMGLVPITLAGLFVAA).

This sequence belongs to the PetG family. The 4 large subunits of the cytochrome b6-f complex are cytochrome b6, subunit IV (17 kDa polypeptide, PetD), cytochrome f and the Rieske protein, while the 4 small subunits are PetG, PetL, PetM and PetN. The complex functions as a dimer.

The protein localises to the cellular thylakoid membrane. Component of the cytochrome b6-f complex, which mediates electron transfer between photosystem II (PSII) and photosystem I (PSI), cyclic electron flow around PSI, and state transitions. PetG is required for either the stability or assembly of the cytochrome b6-f complex. The chain is Cytochrome b6-f complex subunit 5 from Gloeothece citriformis (strain PCC 7424) (Cyanothece sp. (strain PCC 7424)).